The primary structure comprises 531 residues: Arginine--tRNA ligase (531 aa).

The 'HIGH' region signature appears at 113–123 (ANPTGPLHIGH).

It belongs to the class-I aminoacyl-tRNA synthetase family. As to quaternary structure, monomer.

The protein localises to the cytoplasm. The enzyme catalyses tRNA(Arg) + L-arginine + ATP = L-arginyl-tRNA(Arg) + AMP + diphosphate. The polypeptide is Arginine--tRNA ligase (Campylobacter lari (strain RM2100 / D67 / ATCC BAA-1060)).